We begin with the raw amino-acid sequence, 340 residues long: tRNA N6-adenosine threonylcarbamoyltransferase (340 aa).

Fe cation-binding residues include histidine 115 and histidine 119. Substrate is bound by residues isoleucine 137–glycine 141, aspartate 170, glycine 183, aspartate 187, and asparagine 276. Aspartate 304 serves as a coordination point for Fe cation.

The protein belongs to the KAE1 / TsaD family. The cofactor is Fe(2+).

It is found in the cytoplasm. The catalysed reaction is L-threonylcarbamoyladenylate + adenosine(37) in tRNA = N(6)-L-threonylcarbamoyladenosine(37) in tRNA + AMP + H(+). Required for the formation of a threonylcarbamoyl group on adenosine at position 37 (t(6)A37) in tRNAs that read codons beginning with adenine. Is involved in the transfer of the threonylcarbamoyl moiety of threonylcarbamoyl-AMP (TC-AMP) to the N6 group of A37, together with TsaE and TsaB. TsaD likely plays a direct catalytic role in this reaction. The sequence is that of tRNA N6-adenosine threonylcarbamoyltransferase from Staphylococcus epidermidis (strain ATCC 35984 / DSM 28319 / BCRC 17069 / CCUG 31568 / BM 3577 / RP62A).